The sequence spans 420 residues: Glutamate-1-semialdehyde 2,1-aminomutase (420 aa).

K259 bears the N6-(pyridoxal phosphate)lysine mark.

It belongs to the class-III pyridoxal-phosphate-dependent aminotransferase family. HemL subfamily. Homodimer. The cofactor is pyridoxal 5'-phosphate.

It localises to the cytoplasm. It carries out the reaction (S)-4-amino-5-oxopentanoate = 5-aminolevulinate. It participates in porphyrin-containing compound metabolism; protoporphyrin-IX biosynthesis; 5-aminolevulinate from L-glutamyl-tRNA(Glu): step 2/2. This chain is Glutamate-1-semialdehyde 2,1-aminomutase, found in Nautilia profundicola (strain ATCC BAA-1463 / DSM 18972 / AmH).